The following is a 251-amino-acid chain: uncharacterized protein (251 aa).

To M.jannaschii MJ1311.

This is an uncharacterized protein from Methanocaldococcus jannaschii (strain ATCC 43067 / DSM 2661 / JAL-1 / JCM 10045 / NBRC 100440) (Methanococcus jannaschii).